The sequence spans 220 residues: Ribose-5-phosphate isomerase A (220 aa).

Residues threonine 25–threonine 28, aspartate 80–aspartate 83, and lysine 93–glycine 96 each bind substrate. Glutamate 102 (proton acceptor) is an active-site residue. Lysine 120 lines the substrate pocket.

This sequence belongs to the ribose 5-phosphate isomerase family. In terms of assembly, homodimer.

It catalyses the reaction aldehydo-D-ribose 5-phosphate = D-ribulose 5-phosphate. It functions in the pathway carbohydrate degradation; pentose phosphate pathway; D-ribose 5-phosphate from D-ribulose 5-phosphate (non-oxidative stage): step 1/1. Catalyzes the reversible conversion of ribose-5-phosphate to ribulose 5-phosphate. In Bacillus cereus (strain ATCC 14579 / DSM 31 / CCUG 7414 / JCM 2152 / NBRC 15305 / NCIMB 9373 / NCTC 2599 / NRRL B-3711), this protein is Ribose-5-phosphate isomerase A.